Reading from the N-terminus, the 120-residue chain is Protein EPIDERMAL PATTERNING FACTOR 2 (120 aa).

Residues Met-1–Ser-25 form the signal peptide. Cystine bridges form between Cys-76–Cys-107, Cys-80–Cys-86, Cys-83–Cys-109, and Cys-95–Cys-101.

This sequence belongs to the plant cysteine rich small secretory peptide family. Epidermal patterning factor subfamily. Interacts with ERECTA, ERL1 and TMM. Expressed in leaves, especially by the MMCs and their early descendants cells (stomatal lineage cells) including guard mother cells (GMCs).

It is found in the secreted. Its function is as follows. Controls stomatal patterning. Regulates the number of cells that enter, and remain in, the stomatal lineage by inhibiting protodermal cells from adopting the meristemoid mother cell (MMC) fate in a non-cell-autonomous manner. Mediates stomatal development inhibition. MEPF2: mobile signal controlling stomatal development in a non-cell-autonomous manner. Uses ERECTA as major receptor. Inactivated by cleavage by CRSP (AC Q9LNU1). May act by competing with somatogen (AC Q9SV72) for the same receptor, TMM (AC Q9SSD1). The chain is Protein EPIDERMAL PATTERNING FACTOR 2 from Arabidopsis thaliana (Mouse-ear cress).